The primary structure comprises 1960 residues: MQSFREQSSYHGNQQSYPQEVHGSSRLEEFSPRQAQMFQNFGGTGGSSGSSGSGSGGGRRGAAAAAAAMASETSGHQGYQGFRKEAGDFYYMAGNKDPVTTGTPQPPQRRPSGPVQSYGPPQGSSFGNQYGSEGHVGQFQAQHSGLGGVSHYQQDYTGPFSPGSAQYQQQASSQQQQQQVQQLRQQLYQSHQPLPQATGQPASSSSHLQPMQRPSTLPSSAAGYQLRVGQFGQHYQSSASSSSSSSFPSPQRFSQSGQSYDGSYNVNAGSQYEGHNVGSNAQAYGTQSNYSYQPQSMKNFEQAKIPQGTQQGQQQQQPQQQQHPSQHVMQYTNAATKLPLQSQVGQYNQPEVPVRSPMQFHQNFSPISNPSPAASVVQSPSCSSTPSPLMQTGENLQCGQGSVPMGSRNRILQLMPQLSPTPSMMPSPNSHAAGFKGFGLEGVPEKRLTDPGLSSLSALSTQVANLPNTVQHMLLSDALTPQKKTSKRPSSSKKADSCTNSEGSSQPEEQLKSPMAESLDGGCSSSSEDQGERVRQLSGQSTSSDTTYKGGASEKAGSSPAQGAQNEPPRLNASPAAREEATSPGAKDMPLSSDGNPKVNEKTVGVIVSREAMTGRVEKPGGQDKGSQEDDPAATQRPPSNGGAKETSHASLPQPEPPGGGGSKGNKNGDNNSNHNGEGNGQSGHSAAGPGFTSRTEPSKSPGSLRYSYKDSFGSAVPRNVSGFPQYPTGQEKGDFTGHGERKGRNEKFPSLLQEVLQGYHHHPDRRYSRSTQEHQGMAGSLEGTTRPNVLVSQTNELASRGLLNKSIGSLLENPHWGPWERKSSSTAPEMKQINLTDYPIPRKFEIEPQSSAHEPGGSLSERRSVICDISPLRQIVRDPGAHSLGHMSADTRIGRNDRLNPTLSQSVILPGGLVSMETKLKSQSGQIKEEDFEQSKSQASFNNKKSGDHCHPPSIKHESYRGNASPGAATHDSLSDYGPQDSRPTPMRRVPGRVGGREGMRGRSPSQYHDFAEKLKMSPGRSRGPGGDPHHMNPHMTFSERANRSSLHTPFSPNSETLASAYHANTRAHAYGDPNAGLNSQLHYKRQMYQQQPEEYKDWSSGSAQGVIAAAQHRQEGPRKSPRQQQFLDRVRSPLKNDKDGMMYGPPVGTYHDPSAQEAGRCLMSSDGLPNKGMELKHGSQKLQESCWDLSRQTSPAKSSGPPGMSSQKRYGPPHETDGHGLAEATQSSKPGSVMLRLPGQEDHSSQNPLIMRRRVRSFISPIPSKRQSQDVKNSSTEDKGRLLHSSKEGADKAFNSYAHLSHSQDIKSIPKRDSSKDLPSPDSRNCPAVTLTSPAKTKILPPRKGRGLKLEAIVQKITSPNIRRSASSNSAEAGGDTVTLDDILSLKSGPPEGGSVAVQDADIEKRKGEVASDLVSPANQELHVEKPLPRSSEEWRGSVDDKVKTETHAETVTAGKEPPGAMTSTTSQKPGSNQGRPDGSLGGTAPLIFPDSKNVPPVGILAPEANPKAEEKENDTVTISPKQEGFPPKGYFPSGKKKGRPIGSVNKQKKQQQPPPPPPQPPQIPEGSADGEPKPKKQRQRRERRKPGAQPRKRKTKQAVPIVEPQEPEIKLKYATQPLDKTDAKNKSFYPYIHVVNKCELGAVCTIINAEEEEQTKLVRGRKGQRSLTPPPSSTESKALPASSFMLQGPVVTESSVMGHLVCCLCGKWASYRNMGDLFGPFYPQDYAATLPKNPPPKRATEMQSKVKVRHKSASNGSKTDTEEEEEQQQQQKEQRSLAAHPRFKRRHRSEDCGGGPRSLSRGLPCKKAATEGSSEKTVLDSKPSVPTTSEGGPELELQIPELPLDSNEFWVHEGCILWANGIYLVCGRLYGLQEALEIAREMKCSHCQEAGATLGCYNKGCSFRYHYPCAIDADCLLHEENFSVRCPKHKPPLPCPLPPLQNKTAKGSLSTEQSERG.

Positions 1–18 (MQSFREQSSYHGNQQSYP) are enriched in polar residues. The interval 1–287 (MQSFREQSSY…GSNAQAYGTQ (287 aa)) is disordered. The span at 42–60 (GGTGGSSGSSGSGSGGGRR) shows a compositional bias: gly residues. Arg60 is subject to Omega-N-methylarginine. Residues 61–75 (GAAAAAAAMASETSG) show a composition bias toward low complexity. Residues 122–131 (QGSSFGNQYG) are compositionally biased toward polar residues. The segment covering 164–192 (SAQYQQQASSQQQQQQVQQLRQQLYQSHQ) has biased composition (low complexity). Polar residues predominate over residues 193–219 (PLPQATGQPASSSSHLQPMQRPSTLPS). Low complexity predominate over residues 236 to 259 (QSSASSSSSSSFPSPQRFSQSGQS). Composition is skewed to polar residues over residues 260 to 270 (YDGSYNVNAGS) and 277 to 287 (VGSNAQAYGTQ). A Glycyl lysine isopeptide (Lys-Gly) (interchain with G-Cter in SUMO2) cross-link involves residue Lys304. 2 disordered regions span residues 305–328 (IPQG…SQHV) and 360–392 (FHQN…LMQT). Composition is skewed to low complexity over residues 306–322 (PQGT…QQQQ) and 368–388 (SNPS…TPSP). Ser419 and Ser430 each carry phosphoserine. The tract at residues 476 to 748 (SDALTPQKKT…HGERKGRNEK (273 aa)) is disordered. Composition is skewed to polar residues over residues 497 to 508 (SCTNSEGSSQPE) and 537 to 547 (LSGQSTSSDTT). Ser538, Ser559, Ser574, and Ser583 each carry phosphoserine. Position 602 is an N6-acetyllysine (Lys602). The span at 616 to 628 (RVEKPGGQDKGSQ) shows a compositional bias: basic and acidic residues. At Ser640 the chain carries Phosphoserine. The segment covering 665-677 (GNKNGDNNSNHNG) has biased composition (low complexity). Polar residues predominate over residues 693–702 (TSRTEPSKSP). Residues Lys710, Lys733, Lys748, Lys823, Lys832, and Lys844 each participate in a glycyl lysine isopeptide (Lys-Gly) (interchain with G-Cter in SUMO2) cross-link. Basic and acidic residues predominate over residues 732–748 (EKGDFTGHGERKGRNEK). Ser871 is subject to Phosphoserine. Glycyl lysine isopeptide (Lys-Gly) (interchain with G-Cter in SUMO2) cross-links involve residues Lys920 and Lys922. The tract at residues 920-1037 (KLKSQSGQIK…GDPHHMNPHM (118 aa)) is disordered. Lys929 is covalently cross-linked (Glycyl lysine isopeptide (Lys-Gly) (interchain with G-Cter in SUMO1); alternate). Lys929 is covalently cross-linked (Glycyl lysine isopeptide (Lys-Gly) (interchain with G-Cter in SUMO2); alternate). The segment covering 936–945 (SKSQASFNNK) has biased composition (polar residues). Residues 946–961 (KSGDHCHPPSIKHESY) show a composition bias toward basic and acidic residues. A Glycyl lysine isopeptide (Lys-Gly) (interchain with G-Cter in SUMO2) cross-link involves residue Lys957. Ser966 and Ser1005 each carry phosphoserine. Residue Lys1015 forms a Glycyl lysine isopeptide (Lys-Gly) (interchain with G-Cter in SUMO2) linkage. Arg1024 carries the post-translational modification Omega-N-methylarginine. Ser1053 bears the Phosphoserine mark. Residues Lys1086, Lys1098, Lys1137, Lys1173, Lys1178, Lys1183, Lys1210, Lys1231, Lys1267, and Lys1274 each participate in a glycyl lysine isopeptide (Lys-Gly) (interchain with G-Cter in SUMO2) cross-link. 3 disordered regions span residues 1110–1142 (AAAQ…DKDG), 1162–1285 (RCLM…GRLL), and 1303–1331 (SHSQ…CPAV). The segment covering 1130 to 1142 (DRVRSPLKNDKDG) has biased composition (basic and acidic residues). The leucine-zipper stretch occupies residues 1170–1191 (LPNKGMELKHGSQKLQESCWDL). Residues 1254 to 1268 (RRRVRSFISPIPSKR) carry the Nuclear localization signal motif. Residues 1304-1318 (HSQDIKSIPKRDSSK) show a composition bias toward basic and acidic residues. Ser1305 bears the Phosphoserine mark. Lys1309 is covalently cross-linked (Glycyl lysine isopeptide (Lys-Gly) (interchain with G-Cter in SUMO2)). Ser1335 is modified (phosphoserine). Lys1338 participates in a covalent cross-link: Glycyl lysine isopeptide (Lys-Gly) (interchain with G-Cter in SUMO2). Residue Ser1361 is modified to Phosphoserine. Residues 1384–1607 (DILSLKSGPP…TKQAVPIVEP (224 aa)) form a disordered region. Residues Lys1389, Lys1409, Lys1428, and Lys1446 each participate in a glycyl lysine isopeptide (Lys-Gly) (interchain with G-Cter in SUMO2) cross-link. Residues 1424–1451 (LHVEKPLPRSSEEWRGSVDDKVKTETHA) are compositionally biased toward basic and acidic residues. Polar residues predominate over residues 1464-1477 (MTSTTSQKPGSNQG). A Glycyl lysine isopeptide (Lys-Gly) (interchain with G-Cter in SUMO2) cross-link involves residue Lys1510. The residue at position 1522 (Ser1522) is a Phosphoserine. Lys1524 participates in a covalent cross-link: Glycyl lysine isopeptide (Lys-Gly) (interchain with G-Cter in SUMO2). Positions 1537–1551 (GKKKGRPIGSVNKQK) form a DNA-binding region, a.T hook. The span at 1555–1566 (QPPPPPPQPPQI) shows a compositional bias: pro residues. A Nuclear localization signal motif is present at residues 1576 to 1600 (KPKKQRQRRERRKPGAQPRKRKTKQ). A compositionally biased stretch (basic residues) spans 1578-1599 (KKQRQRRERRKPGAQPRKRKTK). Residue Lys1613 forms a Glycyl lysine isopeptide (Lys-Gly) (interchain with G-Cter in SUMO2) linkage. Disordered regions lie at residues 1660–1683 (LVRG…KALP) and 1732–1839 (TLPK…PELE). At Ser1669 the chain carries Phosphoserine. Thr1671, Thr1762, and Thr1764 each carry phosphothreonine. Positions 1785–1792 (RFKRRHRS) match the Nuclear localization signal motif. Residues 1829-1865 (PTTSEGGPELELQIPELPLDSNEFWVHEGCILWANGI) form a C2HC pre-PHD-type; degenerate zinc finger. The segment at 1885 to 1933 (MKCSHCQEAGATLGCYNKGCSFRYHYPCAIDADCLLHEENFSVRCPKHK) adopts a PHD-type zinc-finger fold. The interval 1939–1960 (PLPPLQNKTAKGSLSTEQSERG) is disordered. Polar residues predominate over residues 1944–1960 (QNKTAKGSLSTEQSERG).

As to quaternary structure, homodimer. Interacts with RNF4 and JUN. In terms of tissue distribution, expressed in most tissues, except in ovary and prostate. Isoform 1 is exclusively expressed in brain, heart and testis, and this form predominates in liver and kidney. Isoform 2 predominates in lung.

It is found in the nucleus. Its function is as follows. Transcriptional activator that binds to the regulatory region of MMP3 and thereby controls stromelysin expression. It stimulates the activity of various transcriptional activators such as JUN, SP1, PAX6 and ETS1, suggesting a function as a coactivator. This chain is Transcription factor 20 (TCF20), found in Homo sapiens (Human).